Consider the following 233-residue polypeptide: Peptidyl-tRNA hydrolase (233 aa).

Tyr14 serves as a coordination point for tRNA. His19 serves as the catalytic Proton acceptor. Phe64, Asn66, and Asn112 together coordinate tRNA. Residues 187-233 (VSPRRSGTGQKGKDKPPAPAKQQATATKAEPEPDTRSALQKLMERFK) are disordered.

It belongs to the PTH family. As to quaternary structure, monomer.

It is found in the cytoplasm. The catalysed reaction is an N-acyl-L-alpha-aminoacyl-tRNA + H2O = an N-acyl-L-amino acid + a tRNA + H(+). In terms of biological role, hydrolyzes ribosome-free peptidyl-tRNAs (with 1 or more amino acids incorporated), which drop off the ribosome during protein synthesis, or as a result of ribosome stalling. Functionally, catalyzes the release of premature peptidyl moieties from peptidyl-tRNA molecules trapped in stalled 50S ribosomal subunits, and thus maintains levels of free tRNAs and 50S ribosomes. The polypeptide is Peptidyl-tRNA hydrolase (Roseobacter denitrificans (strain ATCC 33942 / OCh 114) (Erythrobacter sp. (strain OCh 114))).